Here is a 316-residue protein sequence, read N- to C-terminus: Ferrochelatase (316 aa).

Residues His-186 and Glu-268 each coordinate Fe cation.

The protein belongs to the ferrochelatase family.

It localises to the cytoplasm. The enzyme catalyses heme b + 2 H(+) = protoporphyrin IX + Fe(2+). The protein operates within porphyrin-containing compound metabolism; protoheme biosynthesis; protoheme from protoporphyrin-IX: step 1/1. Its function is as follows. Catalyzes the ferrous insertion into protoporphyrin IX. This is Ferrochelatase from Deinococcus radiodurans (strain ATCC 13939 / DSM 20539 / JCM 16871 / CCUG 27074 / LMG 4051 / NBRC 15346 / NCIMB 9279 / VKM B-1422 / R1).